A 364-amino-acid chain; its full sequence is Probable G-protein coupled receptor AH9.4 (364 aa).

Position 1 (M1) is a topological domain, extracellular. The helical transmembrane segment at 2 to 22 threads the bilayer; it reads AFLQSAYLVMVFTVPIAGVIL. Residues 23–48 are Cytoplasmic-facing; it reads NTYVLRKLIRVARKSVVRFETTSGLP. Residues 49-69 traverse the membrane as a helical segment; that stretch reads LAAMSVGDSITLCALLMQAIF. At 70–89 the chain is on the extracellular side; sequence HITPKGEVPTVVLSSICKFG. Residues 90–110 form a helical membrane-spanning segment; that stretch reads IFLIHSTSAFSVWCWFFLSVL. Over 111–130 the chain is Cytoplasmic; it reads RYIAVFHPFKYRTIWRQPRN. A helical membrane pass occupies residues 131–151; that stretch reads ALKFLAGAVGMFQIYTLIFVT. Topologically, residues 152-177 are extracellular; sequence YRQEEKSCGEYDVFHESAFKHVHLLD. Residues 178–198 traverse the membrane as a helical segment; it reads IFLFYAIPSLLRITLDFLVLI. At 199 to 277 the chain is on the cytoplasmic side; the sequence is HCYSPFSVEG…KKKTAMVMRS (79 aa). A helical transmembrane segment spans residues 278–298; that stretch reads ILISVLNLLLNLPSHIFRAWA. The Extracellular segment spans residues 299-315; sequence SYDESSLENEIVRTLEP. A helical transmembrane segment spans residues 316–336; the sequence is IAQMMYFSQFACNAFYLATSI. The Cytoplasmic portion of the chain corresponds to 337–364; the sequence is YETNGSPRNTVISSSNRHVSRCISDDEA.

It belongs to the G-protein coupled receptor 1 family.

Its subcellular location is the cell membrane. Not known. Putative receptor. The chain is Probable G-protein coupled receptor AH9.4 from Caenorhabditis elegans.